Reading from the N-terminus, the 491-residue chain is MTCPNSSCVFEDKMCQGNKTAPANDAQLTPLVVVLSTISLVTVGLNLLVLYAVRSERKLHTVGNLYIVSLSVADLIVGVVVMPMNILYLLMSRWSLGRPLCLFWLSMDYVASTASIFSVFILCIDRYRSVQQPLKYLRYRTKTRASITILAAWFLSFLWIIPILGWRHFQPKTPEPREDKCETDFYNVTWFKVMTAIINFYLPTLLMLWFYAKIYKAVRQHCQHRELINGSFPSFSDMKMKPENLQVGAKKPGKESPWEVLKRKPKDTGGGPVLKPPSQEPKEVTSPGVFSQEKEEKDGELGKFYCFPLDTVQAQPEAEGSGRGYATINQSQNQLEMGEQGLSMPGAKEALEDQILGDSQSFSRTDSDTPAEPAPAKGKSRSESSTGLEYIKFTWKRLRSHSRQYVSGLHMNRERKAAKQLGFIMAAFIICWIPYFIFFMVIAFCESCCNQHVHMFTIWLGYINSTLNPLIYPLCNENFKKTFKKILHIRS.

Residues 1–30 (MTCPNSSCVFEDKMCQGNKTAPANDAQLTP) lie on the Extracellular side of the membrane. N-linked (GlcNAc...) asparagine glycosylation is found at Asn-5 and Asn-18. Residues 31–51 (LVVVLSTISLVTVGLNLLVLY) form a helical membrane-spanning segment. The Cytoplasmic portion of the chain corresponds to 52–65 (AVRSERKLHTVGNL). Residues 66–90 (YIVSLSVADLIVGVVVMPMNILYLL) traverse the membrane as a helical segment. Residues 91 to 98 (MSRWSLGR) are Extracellular-facing. A helical transmembrane segment spans residues 99-124 (PLCLFWLSMDYVASTASIFSVFILCI). Cys-101 and Cys-181 form a disulfide bridge. Residues Asp-108 and Thr-113 each coordinate histamine. Positions 108 to 113 (DYVAST) are important for agonist binding. Residues 125 to 145 (DRYRSVQQPLKYLRYRTKTRA) lie on the Cytoplasmic side of the membrane. Thr-141 and Thr-143 each carry phosphothreonine. A helical membrane pass occupies residues 146-165 (SITILAAWFLSFLWIIPILG). The Extracellular portion of the chain corresponds to 166-189 (WRHFQPKTPEPREDKCETDFYNVT). Residues 190 to 212 (WFKVMTAIINFYLPTLLMLWFYA) form a helical membrane-spanning segment. Asn-199 provides a ligand contact to histamine. The Cytoplasmic segment spans residues 213–420 (KIYKAVRQHC…MNRERKAAKQ (208 aa)). Ser-231 is modified (phosphoserine). 2 disordered regions span residues 246–297 (QVGA…KEEK) and 360–385 (QSFS…SESS). The span at 252-262 (PGKESPWEVLK) shows a compositional bias: basic and acidic residues. Ser-384, Ser-400, and Ser-402 each carry phosphoserine. The chain crosses the membrane as a helical span at residues 421-444 (LGFIMAAFIICWIPYFIFFMVIAF). The important for agonist binding stretch occupies residues 428–432 (FIICW). Histamine is bound at residue Tyr-435. A disulfide bridge connects residues Cys-445 and Cys-448. Residues 445-450 (CESCCN) lie on the Extracellular side of the membrane. The helical transmembrane segment at 451–473 (QHVHMFTIWLGYINSTLNPLIYP) threads the bilayer. Residues 474–491 (LCNENFKKTFKKILHIRS) lie on the Cytoplasmic side of the membrane.

This sequence belongs to the G-protein coupled receptor 1 family. In terms of processing, phosphorylation at sites in the second and third cytoplasmic loops independently contribute to agonist-induced receptor down-regulation. In terms of tissue distribution, brain, lung, small intestine, uterus, adrenal medulla and spleen.

It is found in the cell membrane. Its function is as follows. G-protein-coupled receptor for histamine, a biogenic amine that functions as an immune modulator and a neurotransmitter. Through the H1 receptor, histamine mediates the contraction of smooth muscles and increases capillary permeability due to contraction of terminal venules. Also mediates neurotransmission in the central nervous system and thereby regulates circadian rhythms, emotional and locomotor activities as well as cognitive functions. The chain is Histamine H1 receptor from Bos taurus (Bovine).